Consider the following 436-residue polypeptide: UPF0597 protein YhaM (436 aa).

This sequence belongs to the UPF0597 family.

The chain is UPF0597 protein YhaM from Salmonella choleraesuis (strain SC-B67).